The chain runs to 1067 residues: Lon protease homolog, mitochondrial (1067 aa).

The N-terminal 36 residues, 1–36 (MITRLSGACLRRSGAKRNWPREHLVHRSLLASFSTT), are a transit peptide targeting the mitochondrion. Residues 55–82 (KSKEPKDNKPLDNKNDPKKTHNEDESHT) show a composition bias toward basic and acidic residues. 2 disordered regions span residues 55–142 (KSKE…MPLN) and 262–314 (IPPK…ESTP). The segment covering 128–139 (FELGGEENEDEM) has biased composition (acidic residues). The region spanning 162–425 (LLALPIARRP…KALYVLKKEL (264 aa)) is the Lon N-terminal domain. The segment covering 293–311 (VKSDLKQDNGKEEPEKEVE) has biased composition (basic and acidic residues). 578 to 585 (GPPGVGKT) contributes to the ATP binding site. The tract at residues 791-820 (NSKEKSTGKSGKKTSPQSSEDAANKEASSV) is disordered. The 187-residue stretch at 854-1040 (TTPPGVVMGL…DDVFKRVFSN (187 aa)) folds into the Lon proteolytic domain. Residues serine 946 and lysine 989 contribute to the active site.

Belongs to the peptidase S16 family. Homohexamer or homoheptamer. Organized in a ring with a central cavity.

The protein resides in the mitochondrion matrix. The catalysed reaction is Hydrolysis of proteins in presence of ATP.. Its function is as follows. ATP-dependent serine protease that mediates the selective degradation of misfolded, unassembled or oxidatively damaged polypeptides as well as certain short-lived regulatory proteins in the mitochondrial matrix. May also have a chaperone function in the assembly of inner membrane protein complexes. Participates in the regulation of mitochondrial gene expression and in the maintenance of the integrity of the mitochondrial genome. Binds to mitochondrial DNA in a site-specific manner. This is Lon protease homolog, mitochondrial (pim1) from Schizosaccharomyces pombe (strain 972 / ATCC 24843) (Fission yeast).